Here is a 391-residue protein sequence, read N- to C-terminus: Inhibin beta B chain (391 aa).

Residues M1–A25 form the signal peptide. A propeptide spanning residues T26–R276 is cleaved from the precursor. Positions P27–R47 are disordered. An N-linked (GlcNAc...) asparagine glycan is attached at N77. Cystine bridges form between C280-C288, C287-C356, C316-C388, and C320-C390.

This sequence belongs to the TGF-beta family. In terms of assembly, dimeric, linked by one or more disulfide bonds. Inhibin A is a dimer of alpha and beta-A. Inhibin B is a dimer of alpha and beta-B. Activin A is a homodimer of beta-A. Activin B is a homodimer of beta-B. Activin AB is a dimer of beta-A and beta-B.

Its subcellular location is the secreted. Its function is as follows. Inhibins and activins inhibit and activate, respectively, the secretion of follitropin by the pituitary gland. Inhibins/activins are involved in regulating a number of diverse functions such as hypothalamic and pituitary hormone secretion, gonadal hormone secretion, germ cell development and maturation, erythroid differentiation, insulin secretion, nerve cell survival, embryonic axial development or bone growth, depending on their subunit composition. Inhibins appear to oppose the functions of activins. In Gallus gallus (Chicken), this protein is Inhibin beta B chain (INHBB).